A 765-amino-acid chain; its full sequence is Probable glycosyltransferase STELLO2 (765 aa).

Residues 1-43 (MLVQDRVAPKPPKSRIRELPSRDRFAEPKILDFSSWVSDNVYR) lie on the Cytoplasmic side of the membrane. The helical transmembrane segment at 44–64 (IVIIFLFIVTVAAFFFLYNTT) threads the bilayer. At 65–765 (DTASLLCFQS…EGDPLLMELV (701 aa)) the chain is on the lumenal side. 2 N-linked (GlcNAc...) asparagine glycosylation sites follow: N235 and N723.

This sequence belongs to the STELLO family. In terms of assembly, homo- and heterodimer with STL1. Interacts with CESA1, CESA3, CESA4, CESA6, CESA7 and CESA8, but not with GOT1. As to expression, expressed in cells that are expanding or producing secondary cell walls.

It is found in the golgi apparatus membrane. Probable glycosyltransferase regulating the assembly and trafficking of cellulose synthase complexes. In Arabidopsis thaliana (Mouse-ear cress), this protein is Probable glycosyltransferase STELLO2.